The sequence spans 340 residues: Glycerol-3-phosphate dehydrogenase [NAD(P)+] (340 aa).

Serine 13, tyrosine 14, and lysine 108 together coordinate NADPH. Positions 108, 137, and 139 each coordinate sn-glycerol 3-phosphate. Alanine 141 contacts NADPH. Lysine 193, aspartate 246, serine 256, arginine 257, and asparagine 258 together coordinate sn-glycerol 3-phosphate. Lysine 193 (proton acceptor) is an active-site residue. Residue arginine 257 participates in NADPH binding. NADPH contacts are provided by isoleucine 281 and glutamate 283.

The protein belongs to the NAD-dependent glycerol-3-phosphate dehydrogenase family.

The protein resides in the cytoplasm. The catalysed reaction is sn-glycerol 3-phosphate + NAD(+) = dihydroxyacetone phosphate + NADH + H(+). The enzyme catalyses sn-glycerol 3-phosphate + NADP(+) = dihydroxyacetone phosphate + NADPH + H(+). The protein operates within membrane lipid metabolism; glycerophospholipid metabolism. In terms of biological role, catalyzes the reduction of the glycolytic intermediate dihydroxyacetone phosphate (DHAP) to sn-glycerol 3-phosphate (G3P), the key precursor for phospholipid synthesis. The polypeptide is Glycerol-3-phosphate dehydrogenase [NAD(P)+] (Bartonella henselae (strain ATCC 49882 / DSM 28221 / CCUG 30454 / Houston 1) (Rochalimaea henselae)).